The sequence spans 321 residues: D-alanine--D-alanine ligase (321 aa).

The 195-residue stretch at 121–315 (RSWFLTNNIN…FVNLIEEILK (195 aa)) folds into the ATP-grasp domain. 148 to 199 (IKRPYVIKPFTQGSSIGVEVIFEEDDFNFANYDFPYGDEVIIEKYIKGRELQ) is a binding site for ATP. The Mg(2+) site is built by E268, E282, and N284.

Belongs to the D-alanine--D-alanine ligase family. Mg(2+) serves as cofactor. Mn(2+) is required as a cofactor.

Its subcellular location is the cytoplasm. The enzyme catalyses 2 D-alanine + ATP = D-alanyl-D-alanine + ADP + phosphate + H(+). The protein operates within cell wall biogenesis; peptidoglycan biosynthesis. Its function is as follows. Cell wall formation. The sequence is that of D-alanine--D-alanine ligase from Rickettsia bellii (strain RML369-C).